We begin with the raw amino-acid sequence, 2052 residues long: Unconventional myosin-X (2052 aa).

M1 carries the post-translational modification N-acetylmethionine. A Myosin motor domain is found at 63-739; that stretch reads EGVDDMATLT…LEQKLEKRQE (677 aa). Residues N104, Y113, 160–165, and N215 contribute to the ATP site; that span reads GAGKTE. Residues 619 to 641 are actin-binding; that stretch reads LHSLMATLSASNPFFVRCIKPNM. 3 IQ domains span residues 742–763, 764–787, and 788–817; these read VTRAAMVIRAHVLGYLARKQYK, KVLDCVVIIQKNYRAFLLRRRFLH, and LKKAAVVFQKQLRGQIARRVYRQLLAEKRA. The interval 814–884 is SAH; that stretch reads EKRAEEEKRK…LSRELEKQKE (71 aa). The interval 819 to 843 is disordered; that stretch reads EEKRKREEEEKRKREEEERERERER. A coiled-coil region spans residues 885-935; that stretch reads NKQVEEILRLEKEIEDLQRMKERQELSLTEASLQKLQQLRDEELRRLEDEA. S963 and S966 each carry phosphoserine. The interval 964–1093 is disordered; sequence VGSGCTGEQG…DYDQDDYEDG (130 aa). Residues 988–1003 are compositionally biased toward acidic residues; it reads PEEEEVDEGFEADDDA. Residues 1040-1049 are compositionally biased toward polar residues; the sequence is VVPTSPSADS. Over residues 1081–1092 the composition is skewed to acidic residues; that stretch reads GDYDYDQDDYED. Residue T1152 is modified to Phosphothreonine. 2 PH domains span residues 1206-1304 and 1386-1491; these read EALK…QVHA and EFIV…NVTD. The MyTH4 domain occupies 1541–1689; it reads LPYGDINLNL…PSRDEIEALI (149 aa). Positions 1694–2038 constitute an FERM domain; that stretch reads MTSTVHCHGG…AYISMIVKKR (345 aa).

This sequence belongs to the TRAFAC class myosin-kinesin ATPase superfamily. Myosin family. Monomer, when in an inactive conformation in the cytosol. Homodimer in its active, membrane-bound conformation; antiparallel coiled coil-mediated dimer formation. Interacts with ECPAS. Interacts with NEO 1. Interacts with VASP. Interacts with DCC and ITGB5; the presence of DCC inhibits ITGB5 binding. Interacts with tubulin; ITGB5 or DCC binding inhibits tubulin binding. Interacts strongly with CALM3 and weakly with CALM, the CALM3 interaction is essential for function in filopodial extension and motility. Interacts with ITGB1, ITGB3 and ITGB5. As to expression, detected in kidney, testis, liver, kidney, cerebellum and brain cortex (at protein level).

The protein localises to the cytoplasm. It is found in the cytosol. It localises to the cell projection. Its subcellular location is the lamellipodium. The protein resides in the ruffle. The protein localises to the cytoskeleton. It is found in the filopodium tip. It localises to the cell cortex. Its subcellular location is the filopodium membrane. Functionally, myosins are actin-based motor molecules with ATPase activity. Unconventional myosins serve in intracellular movements. MYO10 binds to actin filaments and actin bundles and functions as a plus end-directed motor. Moves with higher velocity and takes larger steps on actin bundles than on single actin filaments. The tail domain binds to membranous compartments containing phosphatidylinositol 3,4,5-trisphosphate, which are then moved relative to actin filaments. Regulates cell shape, cell spreading and cell adhesion. Stimulates the formation and elongation of filopodia. In hippocampal neurons it induces the formation of dendritic filopodia by trafficking the actin-remodeling protein VASP to the tips of filopodia, where it promotes actin elongation. Plays a role in formation of the podosome belt in osteoclasts. In Bos taurus (Bovine), this protein is Unconventional myosin-X (MYO10).